A 753-amino-acid chain; its full sequence is Oligopeptide transporter 5 (753 aa).

15 consecutive transmembrane segments (helical) span residues 56–76 (TWFL…FFGY), 80–100 (PLTV…KLMA), 132–152 (ITIF…LTIV), 163–183 (AAAM…AGMF), 224–244 (FFLI…YLFP), 296–316 (FFAI…ILPI), 368–388 (YLSI…TATI), 432–452 (WWFV…CEGF), 461–481 (WGLL…GVIL), 506–528 (PLAN…YFVG), 544–564 (FIVQ…TTWW), 583–603 (PWTC…GIIG), 615–635 (PGMN…WFFA), 662–682 (AKAV…YYIF), and 695–715 (ILSA…YFAL).

Belongs to the oligopeptide OPT transporter (TC 2.A.67.1) family. As to expression, expressed predominantly in flowers, and at a very low level in leaves and roots.

Its subcellular location is the membrane. Involved in the translocation of tetra- and pentapeptides across the cellular membrane in an energy-dependent manner. The sequence is that of Oligopeptide transporter 5 (OPT5) from Arabidopsis thaliana (Mouse-ear cress).